The following is a 321-amino-acid chain: Leucine-rich repeat-containing protein 46 (321 aa).

LRR repeat units lie at residues 45–66, 67–88, 89–110, and 111–132; these read ELQT…EGLQ, NLHS…ACIP, SLRF…LDLP, and CLQF…EFPQ. Residues 142–184 form the LRRCT domain; sequence NSCTNQDGYRELVTEALPLLLDLDGQPVVERWISDEEDEASSD. A phosphoserine mark is found at serine 175 and serine 182. Residues 201 to 221 are a coiled coil; sequence LKELEQELSRHREHRQQTALT. The interval 235–321 is disordered; it reads DLPLLPGVPM…TKTTAKRSKK (87 aa).

The protein resides in the cell projection. It is found in the cilium. Its subcellular location is the flagellum. In terms of biological role, required for normal spermatogenesis and male fertility. Plays an important role in sperm flagellum biogenesis. In Homo sapiens (Human), this protein is Leucine-rich repeat-containing protein 46 (LRRC46).